The following is a 497-amino-acid chain: Validamine 7-phosphate valienyltransferase (497 aa).

Residue Asp158 participates in GDP-valienol binding. His182 is a validamine 7-phosphate binding site. Residues Arg290, Lys295, Arg321, 325 to 326 (NR), 361 to 362 (ND), and Thr366 each bind GDP-valienol. Validamine 7-phosphate is bound at residue 383 to 386 (DGQN). GDP-valienol is bound by residues 387-388 (LS) and Glu391.

The protein belongs to the glycosyltransferase 20 family. As to quaternary structure, homodimer.

The catalysed reaction is validamine 7-phosphate + GDP-valienol = validoxylamine A 7'-phosphate + GDP + H(+). In terms of biological role, involved in the biosynthesis of the antifungal agent validamycin A. Catalyzes the condensation between GDP-valienol and validamine 7-phosphate via a nonglycosidic C-N bond formation to yield validoxylamine A 7'-phosphate. The protein is Validamine 7-phosphate valienyltransferase of Streptomyces hygroscopicus subsp. limoneus.